The primary structure comprises 318 residues: Cytochrome f (318 aa).

The first 33 residues, methionine 1–alanine 33, serve as a signal peptide directing secretion. Tyrosine 34, cysteine 54, cysteine 57, and histidine 58 together coordinate heme. Residues valine 284–lysine 304 traverse the membrane as a helical segment.

Belongs to the cytochrome f family. In terms of assembly, the 4 large subunits of the cytochrome b6-f complex are cytochrome b6, subunit IV (17 kDa polypeptide, petD), cytochrome f and the Rieske protein, while the 4 small subunits are PetG, PetL, PetM and PetN. The complex functions as a dimer. Heme is required as a cofactor.

It is found in the plastid. Its subcellular location is the chloroplast thylakoid membrane. Its function is as follows. Component of the cytochrome b6-f complex, which mediates electron transfer between photosystem II (PSII) and photosystem I (PSI), cyclic electron flow around PSI, and state transitions. The sequence is that of Cytochrome f from Oenothera biennis (German evening primrose).